The primary structure comprises 294 residues: ATP phosphoribosyltransferase (294 aa).

This sequence belongs to the ATP phosphoribosyltransferase family. Long subfamily. Mg(2+) serves as cofactor.

The protein localises to the cytoplasm. It carries out the reaction 1-(5-phospho-beta-D-ribosyl)-ATP + diphosphate = 5-phospho-alpha-D-ribose 1-diphosphate + ATP. Its pathway is amino-acid biosynthesis; L-histidine biosynthesis; L-histidine from 5-phospho-alpha-D-ribose 1-diphosphate: step 1/9. Feedback inhibited by histidine. Catalyzes the condensation of ATP and 5-phosphoribose 1-diphosphate to form N'-(5'-phosphoribosyl)-ATP (PR-ATP). Has a crucial role in the pathway because the rate of histidine biosynthesis seems to be controlled primarily by regulation of HisG enzymatic activity. The sequence is that of ATP phosphoribosyltransferase from Chlorobaculum parvum (strain DSM 263 / NCIMB 8327) (Chlorobium vibrioforme subsp. thiosulfatophilum).